We begin with the raw amino-acid sequence, 185 residues long: Ribosome-recycling factor (185 aa).

This sequence belongs to the RRF family.

Its subcellular location is the cytoplasm. Its function is as follows. Responsible for the release of ribosomes from messenger RNA at the termination of protein biosynthesis. May increase the efficiency of translation by recycling ribosomes from one round of translation to another. This is Ribosome-recycling factor from Myxococcus xanthus (strain DK1622).